We begin with the raw amino-acid sequence, 169 residues long: Protein FAM106A (169 aa).

Belongs to the FAM106 family.

The chain is Protein FAM106A (FAM106A) from Homo sapiens (Human).